The primary structure comprises 329 residues: Glycerol-3-phosphate dehydrogenase [NAD(P)+] (329 aa).

W11, R30, and K103 together coordinate NADPH. Sn-glycerol 3-phosphate is bound by residues K103, G132, and S134. A136 contributes to the NADPH binding site. Sn-glycerol 3-phosphate contacts are provided by K187, D240, S250, R251, and N252. Catalysis depends on K187, which acts as the Proton acceptor. Residue R251 coordinates NADPH. The NADPH site is built by V275 and E277.

Belongs to the NAD-dependent glycerol-3-phosphate dehydrogenase family.

Its subcellular location is the cytoplasm. The enzyme catalyses sn-glycerol 3-phosphate + NAD(+) = dihydroxyacetone phosphate + NADH + H(+). It carries out the reaction sn-glycerol 3-phosphate + NADP(+) = dihydroxyacetone phosphate + NADPH + H(+). It functions in the pathway membrane lipid metabolism; glycerophospholipid metabolism. Its function is as follows. Catalyzes the reduction of the glycolytic intermediate dihydroxyacetone phosphate (DHAP) to sn-glycerol 3-phosphate (G3P), the key precursor for phospholipid synthesis. This chain is Glycerol-3-phosphate dehydrogenase [NAD(P)+], found in Dechloromonas aromatica (strain RCB).